The sequence spans 321 residues: Olfactory receptor 5K3 (321 aa).

Residues methionine 1–threonine 25 lie on the Extracellular side of the membrane. Asparagine 5 carries N-linked (GlcNAc...) asparagine glycosylation. The chain crosses the membrane as a helical span at residues valine 26–valine 46. At alanine 47–histidine 56 the chain is on the cytoplasmic side. The chain crosses the membrane as a helical span at residues threonine 57 to isoleucine 77. The Extracellular segment spans residues threonine 78–cysteine 97. An intrachain disulfide couples cysteine 97 to cysteine 179. Residues methionine 98 to methionine 118 form a helical membrane-spanning segment. Topologically, residues alanine 119–glutamine 143 are cytoplasmic. The chain crosses the membrane as a helical span at residues methionine 144–leucine 164. Over arginine 165–glutamate 196 the chain is Extracellular. The chain crosses the membrane as a helical span at residues leucine 197 to phenylalanine 217. The Cytoplasmic segment spans residues tyrosine 218–alanine 235. A helical membrane pass occupies residues leucine 236–methionine 256. Residues tyrosine 257 to aspartate 269 lie on the Extracellular side of the membrane. A helical transmembrane segment spans residues isoleucine 270 to leucine 290. The Cytoplasmic segment spans residues arginine 291–threonine 321.

This sequence belongs to the G-protein coupled receptor 1 family.

It is found in the cell membrane. Its function is as follows. Odorant receptor. This chain is Olfactory receptor 5K3 (OR5K3), found in Homo sapiens (Human).